We begin with the raw amino-acid sequence, 215 residues long: Cytochrome b6 (215 aa).

A helical membrane pass occupies residues 32 to 52; that stretch reads IFYCLGGITLVCFLIQFATGF. Residue Cys-35 participates in heme c binding. Heme b contacts are provided by His-86 and His-100. Transmembrane regions (helical) follow at residues 90–110, 116–136, and 186–206; these read ASMM…TGGF, LTWV…VTGY, and AHTF…FLMI. Positions 187 and 202 each coordinate heme b.

It belongs to the cytochrome b family. PetB subfamily. In terms of assembly, the 4 large subunits of the cytochrome b6-f complex are cytochrome b6, subunit IV (17 kDa polypeptide, PetD), cytochrome f and the Rieske protein, while the 4 small subunits are PetG, PetL, PetM and PetN. The complex functions as a dimer. Requires heme b as cofactor. It depends on heme c as a cofactor.

It is found in the cellular thylakoid membrane. Functionally, component of the cytochrome b6-f complex, which mediates electron transfer between photosystem II (PSII) and photosystem I (PSI), cyclic electron flow around PSI, and state transitions. This chain is Cytochrome b6, found in Trichormus variabilis (strain ATCC 29413 / PCC 7937) (Anabaena variabilis).